Reading from the N-terminus, the 495-residue chain is Aspartyl/glutamyl-tRNA(Asn/Gln) amidotransferase subunit B (495 aa).

This sequence belongs to the GatB/GatE family. GatB subfamily. In terms of assembly, heterotrimer of A, B and C subunits.

It catalyses the reaction L-glutamyl-tRNA(Gln) + L-glutamine + ATP + H2O = L-glutaminyl-tRNA(Gln) + L-glutamate + ADP + phosphate + H(+). The enzyme catalyses L-aspartyl-tRNA(Asn) + L-glutamine + ATP + H2O = L-asparaginyl-tRNA(Asn) + L-glutamate + ADP + phosphate + 2 H(+). Its function is as follows. Allows the formation of correctly charged Asn-tRNA(Asn) or Gln-tRNA(Gln) through the transamidation of misacylated Asp-tRNA(Asn) or Glu-tRNA(Gln) in organisms which lack either or both of asparaginyl-tRNA or glutaminyl-tRNA synthetases. The reaction takes place in the presence of glutamine and ATP through an activated phospho-Asp-tRNA(Asn) or phospho-Glu-tRNA(Gln). This Halobacterium salinarum (strain ATCC 700922 / JCM 11081 / NRC-1) (Halobacterium halobium) protein is Aspartyl/glutamyl-tRNA(Asn/Gln) amidotransferase subunit B.